Reading from the N-terminus, the 689-residue chain is tRNA wybutosine-synthesizing protein 4 (689 aa).

The interval 1 to 33 (MTSTSKLDANQLARQRKKLEKDRRKKVYDDQQV) is disordered. A compositionally biased stretch (basic residues) spans 14–26 (RQRKKLEKDRRKK). Residues Arg-84, Gly-111, Asp-137, 183–184 (DL), and Glu-215 each bind S-adenosyl-L-methionine.

This sequence belongs to the methyltransferase superfamily. LCMT family.

It carries out the reaction 7-[(3S)-3-amino-3-carboxypropyl]wyosine(37) in tRNA(Phe) + S-adenosyl-L-methionine = 7-[(3S)-(3-amino-3-methoxycarbonyl)propyl]wyosine(37) in tRNA(Phe) + S-adenosyl-L-homocysteine. The enzyme catalyses 7-[(3S)-(3-amino-3-methoxycarbonyl)propyl]wyosine(37) in tRNA(Phe) + S-adenosyl-L-methionine + CO2 = wybutosine(37) in tRNA(Phe) + S-adenosyl-L-homocysteine + 2 H(+). It participates in tRNA modification; wybutosine-tRNA(Phe) biosynthesis. Functionally, probable S-adenosyl-L-methionine-dependent methyltransferase that acts as a component of the wybutosine biosynthesis pathway. Wybutosine is a hyper modified guanosine with a tricyclic base found at the 3'-position adjacent to the anticodon of eukaryotic phenylalanine tRNA. May methylate the carboxyl group of leucine residues to form alpha-leucine ester residues. This Candida albicans (strain SC5314 / ATCC MYA-2876) (Yeast) protein is tRNA wybutosine-synthesizing protein 4 (PPM2).